Here is a 275-residue protein sequence, read N- to C-terminus: NH(3)-dependent NAD(+) synthetase (275 aa).

G50–S57 is a binding site for ATP. Residue D56 coordinates Mg(2+). Residue R147 coordinates deamido-NAD(+). ATP is bound at residue T167. Residue E172 coordinates Mg(2+). K180 and D187 together coordinate deamido-NAD(+). K196 and T218 together coordinate ATP. H267–K268 contacts deamido-NAD(+).

The protein belongs to the NAD synthetase family. As to quaternary structure, homodimer.

It carries out the reaction deamido-NAD(+) + NH4(+) + ATP = AMP + diphosphate + NAD(+) + H(+). It participates in cofactor biosynthesis; NAD(+) biosynthesis; NAD(+) from deamido-NAD(+) (ammonia route): step 1/1. Catalyzes the ATP-dependent amidation of deamido-NAD to form NAD. Uses ammonia as a nitrogen source. This Pseudomonas entomophila (strain L48) protein is NH(3)-dependent NAD(+) synthetase.